Consider the following 69-residue polypeptide: Amphipathic peptide StCT2 (69 aa).

The N-terminal stretch at 1–23 (MKTQFAVLIISMILMQMLVQTEA) is a signal peptide. At Ile37 the chain carries Isoleucine amide. Residues 41–69 (SLRNQDQFDNMFDSDLSDADLKLLDDLFD) constitute a propeptide that is removed on maturation.

The protein belongs to the non-disulfide-bridged peptide (NDBP) superfamily. Short antimicrobial peptide (group 4) family. In terms of tissue distribution, expressed by the venom gland.

Its subcellular location is the secreted. It is found in the target cell membrane. Its function is as follows. Antimicrobial peptide that is rapidly bactericidal against Gram-positive bacteria. This Scorpiops tibetanus (Scorpion) protein is Amphipathic peptide StCT2.